The sequence spans 216 residues: MIF4G domain-containing protein A (216 aa).

One can recognise an MIF4G domain in the interval 2 to 199 (DSAWTALDME…LEILEFRASG (198 aa)).

Belongs to the MIF4GD family. In terms of assembly, interacts with eif4g1, eif4g2 and slbp; probably tethered by SLBP to the 3'-end of mRNAs ending with the histone stem-loop, it also interacts with eif4g1 which is bound to their 5'-end.

The protein localises to the cytoplasm. Its subcellular location is the nucleus. Functionally, functions in replication-dependent translation of histone mRNAs which differ from other eukaryotic mRNAs in that they do not end with a poly-A tail but a stem-loop. May participate in circularizing those mRNAs specifically enhancing their translation. The sequence is that of MIF4G domain-containing protein A (mif4gda) from Danio rerio (Zebrafish).